The chain runs to 514 residues: 2,3-bisphosphoglycerate-independent phosphoglycerate mutase (514 aa).

Aspartate 14 and serine 64 together coordinate Mn(2+). Catalysis depends on serine 64, which acts as the Phosphoserine intermediate. Substrate is bound by residues histidine 125, arginine 155–aspartate 156, arginine 187, arginine 193, arginine 263–arginine 266, and lysine 337. Positions 404, 408, 445, 446, and 464 each coordinate Mn(2+).

This sequence belongs to the BPG-independent phosphoglycerate mutase family. Monomer. Requires Mn(2+) as cofactor.

The catalysed reaction is (2R)-2-phosphoglycerate = (2R)-3-phosphoglycerate. It functions in the pathway carbohydrate degradation; glycolysis; pyruvate from D-glyceraldehyde 3-phosphate: step 3/5. Its function is as follows. Catalyzes the interconversion of 2-phosphoglycerate and 3-phosphoglycerate. This Pseudoalteromonas translucida (strain TAC 125) protein is 2,3-bisphosphoglycerate-independent phosphoglycerate mutase.